A 581-amino-acid polypeptide reads, in one-letter code: NADH-quinone oxidoreductase subunit C/D (581 aa).

The tract at residues 1–172 is NADH dehydrogenase I subunit C; it reads MSGTDLVSEL…PLFNMTAALF (172 aa). Residues 196-581 are NADH dehydrogenase I subunit D; the sequence is ELMILNYGPH…IDYVMSDVDR (386 aa).

It in the N-terminal section; belongs to the complex I 30 kDa subunit family. This sequence in the C-terminal section; belongs to the complex I 49 kDa subunit family. NDH-1 is composed of 13 different subunits. Subunits NuoB, CD, E, F, and G constitute the peripheral sector of the complex.

It localises to the cell inner membrane. It carries out the reaction a quinone + NADH + 5 H(+)(in) = a quinol + NAD(+) + 4 H(+)(out). Functionally, NDH-1 shuttles electrons from NADH, via FMN and iron-sulfur (Fe-S) centers, to quinones in the respiratory chain. The immediate electron acceptor for the enzyme in this species is believed to be ubiquinone. Couples the redox reaction to proton translocation (for every two electrons transferred, four hydrogen ions are translocated across the cytoplasmic membrane), and thus conserves the redox energy in a proton gradient. In Rhodopseudomonas palustris (strain BisB5), this protein is NADH-quinone oxidoreductase subunit C/D.